Consider the following 270-residue polypeptide: MKKTKERETPEVPDELFAKCPACKHMIYQKDLGLEKICPKCFYNFRISAKERLAITVDGDSFQEMFTGIKSKDPLNFPAYQEKLAATQSKTGLDEAVVTGTAEFTGQKAALAIMDSNFIMASMGTVVGEKITRLFEYAREERLPVVIFTASGGARMQEGIMSLMQMAKISAAVKRHSNAGLFYLTVLTDPTTGGVTASFAMEGDIILAEPQTLIGFAGRRVIETTVRETLPEGFQKAEFLLEHGFVDAIVKRTELKKTIAKLLAFHGGSK.

One can recognise a CoA carboxyltransferase N-terminal domain in the interval 16 to 270 (LFAKCPACKH…KLLAFHGGSK (255 aa)). 4 residues coordinate Zn(2+): Cys20, Cys23, Cys38, and Cys41. The C4-type zinc finger occupies 20-41 (CPACKHMIYQKDLGLEKICPKC).

It belongs to the AccD/PCCB family. In terms of assembly, acetyl-CoA carboxylase is a heterohexamer composed of biotin carboxyl carrier protein (AccB), biotin carboxylase (AccC) and two subunits each of ACCase subunit alpha (AccA) and ACCase subunit beta (AccD). It depends on Zn(2+) as a cofactor.

It is found in the cytoplasm. It carries out the reaction N(6)-carboxybiotinyl-L-lysyl-[protein] + acetyl-CoA = N(6)-biotinyl-L-lysyl-[protein] + malonyl-CoA. It participates in lipid metabolism; malonyl-CoA biosynthesis; malonyl-CoA from acetyl-CoA: step 1/1. Component of the acetyl coenzyme A carboxylase (ACC) complex. Biotin carboxylase (BC) catalyzes the carboxylation of biotin on its carrier protein (BCCP) and then the CO(2) group is transferred by the transcarboxylase to acetyl-CoA to form malonyl-CoA. This is Acetyl-coenzyme A carboxylase carboxyl transferase subunit beta from Streptococcus mutans serotype c (strain NN2025).